The following is a 545-amino-acid chain: MDVQYVLADLQTGPESQSSQSSIHFHDMAPFYVVSIERQHGLSGLVSIVPCSTTPTIHYDEKDKKAYQKAWSRGRRFAALFENLLNGGKMATKTSCSLQQTPYLQLRDEALIVGSPLGTPTRTREGISSFHNMEFNFPGAKPVVSSQMLHITCPGLRSEESLFDKNGGALYDSVTVLTGMCLFTRKILDESVADGFLDTRKLLDMQLTLYEVERIAGLSSAIADIAALVLSRYDGKCHKPVNIILDLPTWHYYQSVEDQLQHRGYKPCEVMDWIEAITLRSQQLAGLLKSAVLHELDRRGVSSSQRLYDIQISPGSALVDDAFRETLKYENLPCLDNILEALSGSEDGSWQQFYSLLPERDRPQSIKDLSYLFYIFEVVRPAVLAGIQSGNQQTPTQSADMDSTVSHRQQQPASSRSYTSKQNQMPRPLVISVDDPSERKLYSKAHSFFLRLPKNPIYPADPTLVQVYTTRRVFVDGNRKGERLYRNDPSPVMPELSNGKLYGDGGDAGYSKYARELQQMDFIAKLYGAECAANIQRWSKEVGLC.

The span at 390–425 shows a compositional bias: polar residues; the sequence is GNQQTPTQSADMDSTVSHRQQQPASSRSYTSKQNQM. Residues 390–433 form a disordered region; sequence GNQQTPTQSADMDSTVSHRQQQPASSRSYTSKQNQMPRPLVISV. Positions 434–438 match the Conserved DDXXE motif motif; that stretch reads DDPSE.

It belongs to the arginine-containing cyclodipeptide synthase family.

It carries out the reaction L-glutamyl-tRNA(Glu) + L-arginyl-tRNA(Arg) = cyclo(L-arginyl-L-glutamyl) + tRNA(Glu) + tRNA(Arg) + 2 H(+). The protein operates within secondary metabolite biosynthesis. Its function is as follows. Arginine-containing cyclodipeptide synthase; part of the cluster that mediates the biosynthesis of a highly modified cyclo-arginine-glutamate dipeptide (cRE). Within the pathway, ateA acts as the scaffold-generating enzyme and is responsible for formation of the cyclo-Arg-Glu diketopiperazine (cRW) from L-arginyl-tRNA(Arg) + L-glutamyl-tRNA(Glu). Additional enzymes from the cluster then further modify the cyclo-Arg-Glu diketopiperazine (cRW) scaffold. This Aspergillus terreus protein is Arginine-containing cyclodipeptide synthase ateA.